A 383-amino-acid polypeptide reads, in one-letter code: Cytochrome b (383 aa).

The next 4 helical transmembrane spans lie at 30–50 (FGSLLGLCLGIQILTGVLLAM), 74–96 (WILRYVHANGASLFFICVYCHIG), 109–129 (TWIVGVLIYFIMMLTAFIGYV), and 175–195 (FFSLHYLLPFVLVGLVLAHLL). 2 residues coordinate heme b: H80 and H94. The heme b site is built by H179 and H193. H198 is a binding site for a ubiquinone. 4 consecutive transmembrane segments (helical) span residues 221-241 (FTIKDILGFLILLGVFVIIGI), 289-309 (GVLALFASILVLLLMPILDRS), 320-340 (AKFFFWFIVGDFFILTWIGSA), and 345-365 (EPYVLIGRIATIFYFGYFLVL).

The protein belongs to the cytochrome b family. In terms of assembly, the main subunits of complex b-c1 are: cytochrome b, cytochrome c1 and the Rieske protein. It depends on heme b as a cofactor.

It localises to the mitochondrion inner membrane. Its function is as follows. Component of the ubiquinol-cytochrome c reductase complex (complex III or cytochrome b-c1 complex) that is part of the mitochondrial respiratory chain. The b-c1 complex mediates electron transfer from ubiquinol to cytochrome c. Contributes to the generation of a proton gradient across the mitochondrial membrane that is then used for ATP synthesis. The sequence is that of Cytochrome b (mt:Cyt-b) from Trichoplax adhaerens (Trichoplax reptans).